Reading from the N-terminus, the 412-residue chain is Double C2-like domain-containing protein beta (412 aa).

The segment at 1 to 36 (MTLRRRGEKATISIQEHMAIDVCPGPIRPIKQISDY) is negatively regulates targeting to plasma membrane. The tract at residues 1–90 (MTLRRRGEKA…EDVDQLFGAY (90 aa)) is mediates interaction with DYNLT1. Positions 38-123 (PRFPRGLPPT…PDVDGYESDD (86 aa)) are disordered. The span at 43-58 (GLPPTAAPRAPAPPDA) shows a compositional bias: pro residues. Residues 59-74 (PARSPAASASPRSPSD) are compositionally biased toward low complexity. Residues 95–108 (GPSPGPSPARPPAK) are compositionally biased toward pro residues. Residues 112 to 123 (DEPDVDGYESDD) show a composition bias toward acidic residues. C2 domains follow at residues 126–250 (ALGT…SICL) and 266–399 (ERGR…ERWH). Aspartate 157, aspartate 163, aspartate 218, aspartate 220, aspartate 297, aspartate 303, aspartate 357, aspartate 359, and aspartate 365 together coordinate Ca(2+). A mediates interaction with STXBP3 region spans residues 257 to 375 (DKAEDKSLEE…FIGGVVLGIN (119 aa)). Residue serine 411 is modified to Phosphoserine.

In terms of assembly, interacts with cytoplasmic dynein light chain DYNLT1. May interact with UNC13A; the interaction mediates targeting to the plasma membrane. Probably interacts with the SNARE (soluble N-ethylmaleimide-sensitive factor attached protein receptor) complex composed of SNAP25, STX1A and VAMP2; the interaction is calcium-dependent and competitive with SYT1. Interacts with STX4; the interaction is calcium-dependent, increased by insulin and glucose, and mediates vesicle fusion with plasma membrane in pancreatic cells and adipocytes. Interacts with STXBP3; the interaction is direct, occurs at the cell membrane and regulates glucose-stimulated insulin secretion. Ca(2+) is required as a cofactor. In terms of tissue distribution, widely expressed. Expressed in pancreatic islet cells (at protein level).

The protein resides in the cytoplasm. The protein localises to the cytoplasmic granule. It is found in the cell membrane. In terms of biological role, calcium sensor which positively regulates SNARE-dependent fusion of vesicles with membranes. Binds phospholipids in a calcium-dependent manner and may act at the priming stage of fusion by modifying membrane curvature to stimulate fusion. Involved in calcium-triggered exocytosis in chromaffin cells and calcium-dependent spontaneous release of neurotransmitter in absence of action potentials in neuronal cells. Involved both in glucose-stimulated insulin secretion in pancreatic cells and insulin-dependent GLUT4 transport to the plasma membrane in adipocytes. This is Double C2-like domain-containing protein beta (Doc2b) from Mus musculus (Mouse).